A 587-amino-acid polypeptide reads, in one-letter code: Zinc finger protein 496 (587 aa).

Residues 1–40 form a disordered region; sequence MPTALCPRVLAPKESEEPRKMRSPPGENPSPQGELPSPES. Basic and acidic residues predominate over residues 11-20; sequence APKESEEPRK. Residue Lys13 forms a Glycyl lysine isopeptide (Lys-Gly) (interchain with G-Cter in SUMO2) linkage. The region spanning 42 to 124 is the SCAN box domain; sequence RRLFRRFRYQ…AAVEALEREP (83 aa). Ser185 is modified (phosphoserine). The 71-residue stretch at 221-291 folds into the KRAB domain; it reads SPFKDMILCF…ELQDLQGKEV (71 aa). Residues 260–282 form a disordered region; sequence PPNDLAAQPDLSQGEENEPRVPE. Ser299 carries the phosphoserine modification. Residues 358–399 are disordered; the sequence is SSSGDEDSQHGPYCTEELGSPTEKQRSLPASHRSSTEAGGEV. Over residues 389 to 399 the composition is skewed to polar residues; that stretch reads HRSSTEAGGEV. A Glycyl lysine isopeptide (Lys-Gly) (interchain with G-Cter in SUMO2) cross-link involves residue Lys403. The segment at 406–428 adopts a C2H2-type 1; degenerate zinc-finger fold; the sequence is YVCPNCGKIFRWRVNFIRHLRSR. C2H2-type zinc fingers lie at residues 435 to 457 and 463 to 485; these read HECS…LESH and YRCG…RRIH. Positions 488 to 513 are disordered; sequence PDRLQPVEKREQAASEDADKGPKEPL. Lys496 participates in a covalent cross-link: Glycyl lysine isopeptide (Lys-Gly) (interchain with G-Cter in SUMO2). C2H2-type zinc fingers lie at residues 522–545 and 553–575; these read FQCC…SHFH and FQCR…ERLH.

This sequence belongs to the krueppel C2H2-type zinc-finger protein family. As to quaternary structure, interacts (via zinc-fingers) with JARID2. Interacts with NSD1.

Its subcellular location is the nucleus. Its function is as follows. DNA-binding transcription factor that can both act as an activator and a repressor. The sequence is that of Zinc finger protein 496 (ZNF496) from Homo sapiens (Human).